Consider the following 567-residue polypeptide: Sporulation-specific protein 5 (567 aa).

Polar residues predominate over residues 1–18; the sequence is MNGIITPQKQKQLMSSPS. Disordered regions lie at residues 1-39 and 52-76; these read MNGI…VDVN and ILLT…KKPN. A compositionally biased stretch (low complexity) spans 21–35; it reads PLSTTELSTPTSQTT. The segment covering 56–66 has biased composition (polar residues); the sequence is PGTSPNATPGS. RRM domains are found at residues 296–380 and 384–462; these read RNVY…SLQD and TNLY…FADS.

The protein localises to the cytoplasm. Functionally, RNA-binding protein which plays a role in sporulation. Regulates the progression of meiosis I and may function in the vicinity of the Mei2 dot. The protein is Sporulation-specific protein 5 (spo5) of Schizosaccharomyces pombe (strain 972 / ATCC 24843) (Fission yeast).